The chain runs to 108 residues: UPF0060 membrane protein YnfA (108 aa).

At 1 to 5 (MLKTT) the chain is on the periplasmic side. The helical transmembrane segment at 6–26 (LLFFVTALCEIIGCFLTWLWI) threads the bilayer. Residues 27 to 30 (KRGA) lie on the Cytoplasmic side of the membrane. Residues 31–51 (SVWWLLPAAASLALFVWLLTL) form a helical membrane-spanning segment. The Periplasmic portion of the chain corresponds to 52–60 (HPAASGRVY). The chain crosses the membrane as a helical span at residues 61–81 (AAYGGVYVCTALLWLRVVDGV). The Cytoplasmic segment spans residues 82 to 84 (RLT). Residues 85 to 105 (VYDWCGAPIALCGMLIIVVGW) form a helical membrane-spanning segment. Residues 106-108 (GRT) are Periplasmic-facing.

This sequence belongs to the UPF0060 family.

The protein localises to the cell inner membrane. The protein is UPF0060 membrane protein YnfA of Salmonella dublin (strain CT_02021853).